The following is an 860-amino-acid chain: Probable linoleate 9S-lipoxygenase 4 (860 aa).

The PLAT domain occupies 29–159; the sequence is NALDFTDLAG…RYKSDRIFFA (131 aa). A Lipoxygenase domain is found at 162–860; sequence PYLPSETPEL…GKGIPNSVSI (699 aa). The disordered stretch occupies residues 209–246; that stretch reads PDQGKENVRTTLGGSADYPYPRRGRTGRPPTRTDPKSE. Positions 521, 526, 712, 716, and 860 each coordinate Fe cation.

The protein belongs to the lipoxygenase family. In terms of assembly, monomer. Fe cation is required as a cofactor. As to expression, expressed in tubers and roots. Not detected in leaves, flowers, stems, shoot tips, or axillary buds.

The protein localises to the cytoplasm. The enzyme catalyses (9Z,12Z)-octadecadienoate + O2 = (9S)-hydroperoxy-(10E,12Z)-octadecadienoate. It functions in the pathway lipid metabolism; oxylipin biosynthesis. Its function is as follows. Plant lipoxygenases may be involved in a number of diverse aspects of plant physiology including growth and development, pest resistance, and senescence or responses to wounding. Catalyzes the hydroperoxidation of lipids containing a cis,cis-1,4-pentadiene structure. In Solanum tuberosum (Potato), this protein is Probable linoleate 9S-lipoxygenase 4 (LOX1.4).